Reading from the N-terminus, the 207-residue chain is Thiamine-phosphate synthase (207 aa).

4-amino-2-methyl-5-(diphosphooxymethyl)pyrimidine-binding positions include 36–40 and N68; that span reads QLRMK. 2 residues coordinate Mg(2+): D69 and D88. Residue S106 coordinates 4-amino-2-methyl-5-(diphosphooxymethyl)pyrimidine. A 2-[(2R,5Z)-2-carboxy-4-methylthiazol-5(2H)-ylidene]ethyl phosphate-binding site is contributed by 132–134; it reads TNT. K135 serves as a coordination point for 4-amino-2-methyl-5-(diphosphooxymethyl)pyrimidine. Residues G162 and 182–183 each bind 2-[(2R,5Z)-2-carboxy-4-methylthiazol-5(2H)-ylidene]ethyl phosphate; that span reads VS.

Belongs to the thiamine-phosphate synthase family. Mg(2+) serves as cofactor.

The catalysed reaction is 2-[(2R,5Z)-2-carboxy-4-methylthiazol-5(2H)-ylidene]ethyl phosphate + 4-amino-2-methyl-5-(diphosphooxymethyl)pyrimidine + 2 H(+) = thiamine phosphate + CO2 + diphosphate. It carries out the reaction 2-(2-carboxy-4-methylthiazol-5-yl)ethyl phosphate + 4-amino-2-methyl-5-(diphosphooxymethyl)pyrimidine + 2 H(+) = thiamine phosphate + CO2 + diphosphate. It catalyses the reaction 4-methyl-5-(2-phosphooxyethyl)-thiazole + 4-amino-2-methyl-5-(diphosphooxymethyl)pyrimidine + H(+) = thiamine phosphate + diphosphate. Its pathway is cofactor biosynthesis; thiamine diphosphate biosynthesis; thiamine phosphate from 4-amino-2-methyl-5-diphosphomethylpyrimidine and 4-methyl-5-(2-phosphoethyl)-thiazole: step 1/1. Condenses 4-methyl-5-(beta-hydroxyethyl)thiazole monophosphate (THZ-P) and 2-methyl-4-amino-5-hydroxymethyl pyrimidine pyrophosphate (HMP-PP) to form thiamine monophosphate (TMP). The sequence is that of Thiamine-phosphate synthase from Methanococcus maripaludis (strain DSM 14266 / JCM 13030 / NBRC 101832 / S2 / LL).